The following is a 259-amino-acid chain: Phosphatidylglycerol--prolipoprotein diacylglyceryl transferase (259 aa).

4 consecutive transmembrane segments (helical) span residues 9-29, 55-75, 92-112, and 117-137; these read IIFS…VVGI, FITY…VLLY, EGGM…YLFC, and INFL…LFLG. Arginine 138 contacts a 1,2-diacyl-sn-glycero-3-phospho-(1'-sn-glycerol). Transmembrane regions (helical) follow at residues 172–192, 201–221, and 228–248; these read QLYE…YAVF, GLNS…IEMF, and IGFI…MLLL.

The protein belongs to the Lgt family.

Its subcellular location is the cell inner membrane. The enzyme catalyses L-cysteinyl-[prolipoprotein] + a 1,2-diacyl-sn-glycero-3-phospho-(1'-sn-glycerol) = an S-1,2-diacyl-sn-glyceryl-L-cysteinyl-[prolipoprotein] + sn-glycerol 1-phosphate + H(+). Its pathway is protein modification; lipoprotein biosynthesis (diacylglyceryl transfer). Functionally, catalyzes the transfer of the diacylglyceryl group from phosphatidylglycerol to the sulfhydryl group of the N-terminal cysteine of a prolipoprotein, the first step in the formation of mature lipoproteins. This Rickettsia typhi (strain ATCC VR-144 / Wilmington) protein is Phosphatidylglycerol--prolipoprotein diacylglyceryl transferase.